The following is a 67-amino-acid chain: Alpha-like toxin Lqh3 (67 aa).

Positions 2–66 (RDGYIAQPEN…GIIVEGEKCH (65 aa)) constitute an LCN-type CS-alpha/beta domain. Intrachain disulfides connect C12–C65, C16–C37, C23–C47, and C27–C49. S67 is modified (serine amide).

The protein belongs to the long (4 C-C) scorpion toxin superfamily. Sodium channel inhibitor family. Alpha subfamily. In terms of assembly, monomer. As to expression, expressed by the venom gland.

The protein resides in the secreted. Functionally, alpha toxins bind voltage-independently at site-3 of sodium channels (Nav) and inhibit the inactivation of the activated channels, thereby blocking neuronal transmission. The dissociation is voltage-dependent. This alpha-like toxin is highly toxic to insects and competes with LqhaIT on binding to insect sodium channels. Differs from classical anti-mammalian alpha-toxins as it inhibits sodium channel inactivation in cell bodies of hippocampus brain neurons, on which the anti-mammalian Lqh2 is inactive, and is unable to affect Nav1.2 in the rat brain, on which Lqh2 is highly active. Moreover, its pharmacological properties are unique in that its binding affinity for insect channels drops &gt;30-fold at pH 8.5 versus pH 6.5, and its rate of association with receptor site-3 on both insect and mammalian sodium channels is 4-15-fold slower compared with LqhaIT and Lqh2. In Leiurus hebraeus (Hebrew deathstalker scorpion), this protein is Alpha-like toxin Lqh3.